Consider the following 286-residue polypeptide: Expansin-like protein 1 (286 aa).

The first 21 residues, 1–21 (MKTFVLFVILLCLTFLSISKS), serve as a signal peptide directing secretion. The Extracellular portion of the chain corresponds to 22–265 (ETCPFSQSLV…TGASIGTPSD (244 aa)). In terms of domain architecture, Expansin-like EG45 spans 44–145 (AGNCGYENLM…YKVPCGVNGN (102 aa)). Cystine bridges form between C47–C77 and C80–C140. Residues N82 and N89 are each glycosylated (N-linked (GlcNAc...) asparagine). The helical transmembrane segment at 266 to 286 (ASSLTLYALFSLTILFLVMLN) threads the bilayer.

Belongs to the expansin family. Expansin A subfamily.

It is found in the membrane. Its function is as follows. May serve to lubricate the movement of the cellulose microfibrils during cell growth and wall extension and/or they may serve to maintain the fluid state of the slug cell wall. In Dictyostelium discoideum (Social amoeba), this protein is Expansin-like protein 1 (expl1).